Consider the following 119-residue polypeptide: Large ribosomal subunit protein bL20 (119 aa).

It belongs to the bacterial ribosomal protein bL20 family.

In terms of biological role, binds directly to 23S ribosomal RNA and is necessary for the in vitro assembly process of the 50S ribosomal subunit. It is not involved in the protein synthesizing functions of that subunit. In Rhodopseudomonas palustris (strain BisB18), this protein is Large ribosomal subunit protein bL20.